The chain runs to 100 residues: Ferredoxin-2 (100 aa).

Residues 4-97 (YKVTLINEEE…DCTIMTHQES (94 aa)) form the 2Fe-2S ferredoxin-type domain. Positions 42, 47, 50, and 81 each coordinate [2Fe-2S] cluster.

Belongs to the 2Fe2S plant-type ferredoxin family. The cofactor is [2Fe-2S] cluster.

Its function is as follows. Ferredoxins are iron-sulfur proteins that transfer electrons in a wide variety of metabolic reactions. This is Ferredoxin-2 from Aphanothece sacrum.